Reading from the N-terminus, the 221-residue chain is Transcription factor HES-4 (221 aa).

Positions 1-22 (MAADTPGKPSASPMAGAPASAS) are enriched in low complexity. Residues 1–49 (MAADTPGKPSASPMAGAPASASRTPDKPRSAAEHRKSSKPVMEKRRRAR) form a disordered region. Basic and acidic residues predominate over residues 24-35 (TPDKPRSAAEHR). One can recognise a bHLH domain in the interval 34–91 (HRKSSKPVMEKRRRARINESLAQLKTLILDALRKESSRHSKLEKADILEMTVRHLRSL). The Orange domain maps to 110–143 (YRAGFHECLAEVNRFLAGCEGVPADVRSRLLGHL). The disordered stretch occupies residues 201 to 221 (LPAAPRAGPQGPGGPWRPWLR). A WRPW motif motif is present at residues 216-219 (WRPW).

In terms of assembly, transcription repression requires formation of a complex with a corepressor protein of the Groucho/TLE family.

The protein localises to the nucleus. Its function is as follows. Transcriptional repressor. Binds DNA on N-box motifs: 5'-CACNAG-3'. This is Transcription factor HES-4 (HES4) from Homo sapiens (Human).